A 628-amino-acid polypeptide reads, in one-letter code: 69 kDa protein (628 aa).

5 disordered regions span residues 1–25, 141–332, 347–398, 418–507, and 535–628; these read MSNGLPISIGRPCTHDSQRSLSAPN, HFHA…FRPS, GHLE…HRRS, RGKI…RRTF, and QTVL…PDTD. Residues 299–312 are compositionally biased toward low complexity; sequence PPTTTSRPTGPPSR. Over residues 320–331 the composition is skewed to polar residues; that stretch reads YQSSPHTPNFRP. Positions 434-450 are enriched in pro residues; that stretch reads GAPPPPRRLPSPAPHPQ. Residues 497-507 show a composition bias toward basic and acidic residues; the sequence is TEVHAPERRTF.

It belongs to the tymoviridae protein p69 family.

Functionally, acts as a suppressor of RNA-mediated gene silencing, also known as post-transcriptional gene silencing (PTGS), a mechanism of plant viral defense that limits the accumulation of viral RNAs. The sequence is that of 69 kDa protein from Brassica.